We begin with the raw amino-acid sequence, 426 residues long: Peptidoglycan DD-endopeptidase ShyB (426 aa).

A signal peptide spans 1–21; sequence MGQFRFLALIVAVLCFSVALF. Residues 32–48 show a composition bias toward polar residues; sequence SYSVPLNQSVNTSQPPS. Positions 32–55 are disordered; that stretch reads SYSVPLNQSVNTSQPPSSEMVPSD. Zn(2+) contacts are provided by His291, Asp295, and His372.

This sequence belongs to the peptidase M23B family. In terms of assembly, monomer. Zn(2+) serves as cofactor.

The protein localises to the periplasm. The protein operates within cell wall degradation; peptidoglycan degradation. Its activity is regulated as follows. Not inhibited by metal chelator EDTA. Its function is as follows. Cell wall peptidoglycan (PG) DD-endopeptidase, which may act as a substitute for other zinc-dependent PG endopeptidases (ShyA and ShyC) during zinc starvation. Hydrolyzes peptide cross-links which covalently connect adjacent PG strands probably to allow insertion of new glycans and thus cell wall expansion. Degrades purified whole PG sacculi in vitro. It is unclear how it is able to function in low zinc environments, but that may possibly be due to binding zinc with very high affinity, utilizing an alternative metal cofactor or that it may function independently of a bound metal cofactor. The sequence is that of Peptidoglycan DD-endopeptidase ShyB from Vibrio cholerae serotype O1 (strain ATCC 39315 / El Tor Inaba N16961).